A 420-amino-acid polypeptide reads, in one-letter code: uncharacterized protein (420 aa).

Positions 43–215 (NLCLVLDHSG…HTFRQLFQRM (173 aa)) constitute a VWFA domain. The disordered stretch occupies residues 389 to 420 (LQSGEDLSEGDRKKTRMVSKTTLQPPSAPSEH).

This is an uncharacterized protein from Synechocystis sp. (strain ATCC 27184 / PCC 6803 / Kazusa).